Consider the following 278-residue polypeptide: Undecaprenyl-diphosphatase (278 aa).

6 helical membrane passes run 44–64 (FLEM…MTIY), 84–104 (WQLW…AVPL), 112–132 (FNFM…FIWI), 187–207 (SVAA…YSGL), 224–244 (VWIL…VIRF), and 254–274 (FTVF…YAFI).

This sequence belongs to the UppP family.

It localises to the cell membrane. It catalyses the reaction di-trans,octa-cis-undecaprenyl diphosphate + H2O = di-trans,octa-cis-undecaprenyl phosphate + phosphate + H(+). Functionally, catalyzes the dephosphorylation of undecaprenyl diphosphate (UPP). Confers resistance to bacitracin. This chain is Undecaprenyl-diphosphatase, found in Streptococcus suis (strain 98HAH33).